The sequence spans 92 residues: Secreted RxLR effector protein RXLR-C02 (92 aa).

A signal peptide spans 1-21 (MQFHLLVMTTIAASFAATGSA). Positions 48–51 (RALR) match the RxLR motif. The tract at residues 54-75 (ENRGLIGDDSDSSISDSDSEAK) is disordered.

Belongs to the RxLR effector family.

The protein localises to the secreted. Its subcellular location is the host cytoplasm. It is found in the host nucleus. In terms of biological role, secreted effector that suppresses pattern-triggered immunity (PTI) in plant host. This chain is Secreted RxLR effector protein RXLR-C02, found in Plasmopara halstedii (Downy mildew of sunflower).